The following is a 244-amino-acid chain: Acetylglutamate kinase (244 aa).

Substrate is bound by residues Gly-40–Gly-41, Arg-62, and Asn-155.

This sequence belongs to the acetylglutamate kinase family. ArgB subfamily.

The protein localises to the cytoplasm. The enzyme catalyses N-acetyl-L-glutamate + ATP = N-acetyl-L-glutamyl 5-phosphate + ADP. The protein operates within amino-acid biosynthesis; L-arginine biosynthesis; N(2)-acetyl-L-ornithine from L-glutamate: step 2/4. In terms of biological role, catalyzes the ATP-dependent phosphorylation of N-acetyl-L-glutamate. The sequence is that of Acetylglutamate kinase from Leuconostoc mesenteroides subsp. mesenteroides (strain ATCC 8293 / DSM 20343 / BCRC 11652 / CCM 1803 / JCM 6124 / NCDO 523 / NBRC 100496 / NCIMB 8023 / NCTC 12954 / NRRL B-1118 / 37Y).